The chain runs to 440 residues: 3-phosphoshikimate 1-carboxyvinyltransferase (440 aa).

The 3-phosphoshikimate site is built by Lys25, Ser26, and Arg30. Residue Lys25 participates in phosphoenolpyruvate binding. Phosphoenolpyruvate contacts are provided by Gly96 and Arg124. Ser168, Gln169, Asp310, and Lys337 together coordinate 3-phosphoshikimate. Position 169 (Gln169) interacts with phosphoenolpyruvate. Residue Asp310 is the Proton acceptor of the active site. 3 residues coordinate phosphoenolpyruvate: Arg341, Arg382, and Lys409.

The protein belongs to the EPSP synthase family. In terms of assembly, monomer.

It is found in the cytoplasm. It catalyses the reaction 3-phosphoshikimate + phosphoenolpyruvate = 5-O-(1-carboxyvinyl)-3-phosphoshikimate + phosphate. It participates in metabolic intermediate biosynthesis; chorismate biosynthesis; chorismate from D-erythrose 4-phosphate and phosphoenolpyruvate: step 6/7. Its function is as follows. Catalyzes the transfer of the enolpyruvyl moiety of phosphoenolpyruvate (PEP) to the 5-hydroxyl of shikimate-3-phosphate (S3P) to produce enolpyruvyl shikimate-3-phosphate and inorganic phosphate. The protein is 3-phosphoshikimate 1-carboxyvinyltransferase of Chlamydia trachomatis serovar A (strain ATCC VR-571B / DSM 19440 / HAR-13).